Consider the following 389-residue polypeptide: Protein MEI2-like 7 (389 aa).

Basic residues predominate over residues 170–184; sequence RRGMSKVYKPRKPQR. Residues 170–211 form a disordered region; it reads RRGMSKVYKPRKPQRAGRERSPSPSPVFTTRPMSPTPPMQKL. In terms of domain architecture, RRM spans 216–320; sequence TTVMVRNIPN…KIIDIRAARI (105 aa). The tract at residues 351–370 is disordered; that stretch reads PRDGSTAGAGAPSPPAVKTV.

In terms of biological role, probable RNA-binding protein that may play a role in growth regulation. This is Protein MEI2-like 7 (OML7) from Oryza sativa subsp. japonica (Rice).